The sequence spans 121 residues: UPF0145 protein SGR_4080 (121 aa).

The protein belongs to the UPF0145 family.

The protein is UPF0145 protein SGR_4080 of Streptomyces griseus subsp. griseus (strain JCM 4626 / CBS 651.72 / NBRC 13350 / KCC S-0626 / ISP 5235).